An 822-amino-acid chain; its full sequence is DNA gyrase subunit A (822 aa).

One can recognise a Topo IIA-type catalytic domain in the interval 32-497; the sequence is LPDVRDGLKP…QVLSLEDEDL (466 aa). Y120 acts as the O-(5'-phospho-DNA)-tyrosine intermediate in catalysis. The GyrA-box signature appears at 524 to 530; that stretch reads QKRGGRG.

The protein belongs to the type II topoisomerase GyrA/ParC subunit family. Heterotetramer, composed of two GyrA and two GyrB chains. In the heterotetramer, GyrA contains the active site tyrosine that forms a transient covalent intermediate with DNA, while GyrB binds cofactors and catalyzes ATP hydrolysis.

Its subcellular location is the cytoplasm. The catalysed reaction is ATP-dependent breakage, passage and rejoining of double-stranded DNA.. Its function is as follows. A type II topoisomerase that negatively supercoils closed circular double-stranded (ds) DNA in an ATP-dependent manner to modulate DNA topology and maintain chromosomes in an underwound state. Negative supercoiling favors strand separation, and DNA replication, transcription, recombination and repair, all of which involve strand separation. Also able to catalyze the interconversion of other topological isomers of dsDNA rings, including catenanes and knotted rings. Type II topoisomerases break and join 2 DNA strands simultaneously in an ATP-dependent manner. In Streptococcus pneumoniae (strain ATCC BAA-255 / R6), this protein is DNA gyrase subunit A.